Consider the following 556-residue polypeptide: Oxygen-dependent choline dehydrogenase (556 aa).

6-35 (DYIIIGAGSAGNVLAARLTEDPGVTVLLLE) is an FAD binding site. H475 (proton acceptor) is an active-site residue.

It belongs to the GMC oxidoreductase family. It depends on FAD as a cofactor.

It carries out the reaction choline + A = betaine aldehyde + AH2. It catalyses the reaction betaine aldehyde + NAD(+) + H2O = glycine betaine + NADH + 2 H(+). It functions in the pathway amine and polyamine biosynthesis; betaine biosynthesis via choline pathway; betaine aldehyde from choline (cytochrome c reductase route): step 1/1. Involved in the biosynthesis of the osmoprotectant glycine betaine. Catalyzes the oxidation of choline to betaine aldehyde and betaine aldehyde to glycine betaine at the same rate. The protein is Oxygen-dependent choline dehydrogenase of Xanthomonas axonopodis pv. citri (strain 306).